A 1347-amino-acid chain; its full sequence is Neurofascin (1347 aa).

An N-terminal signal peptide occupies residues 1 to 24 (MARQPPPPWVHAAFLLCLLSLGGA). At 25–1217 (IEIPMDPSIQ…NQADIATQGW (1193 aa)) the chain is on the extracellular side. 6 consecutive Ig-like C2-type domains span residues 41 to 137 (PTIT…LQVS), 143 to 230 (PKEN…NPFT), 244 to 332 (PSFM…ISVR), 337 to 424 (PYWL…AFVS), 429 to 517 (PPRM…VRLE), and 521 to 603 (PTRI…QDLA). 4 cysteine pairs are disulfide-bonded: C63–C118, C162–C213, C268–C316, and C358–C408. Residue N305 is glycosylated (N-linked (GlcNAc...) asparagine). 2 N-linked (GlcNAc...) asparagine glycosylation sites follow: N409 and N446. 2 disulfides stabilise this stretch: C452-C501 and C543-C592. Residue Y481 is modified to Phosphotyrosine. N483 carries an N-linked (GlcNAc...) asparagine glycan. S485 is subject to Phosphoserine. 4 Fibronectin type-III domains span residues 630-725 (RPRD…TSGA), 730-823 (NPGD…SGED), 828-930 (APTE…TPEG), and 934-1030 (APRR…PNEA). The disordered stretch occupies residues 713–740 (PSLPSERYRTSGAPPESNPGDVKGEGTR). N-linked (GlcNAc...) asparagine glycosylation is found at N752 and N778. A disordered region spans residues 915 to 934 (GDGPRSETKEFTTPEGVPSA). The segment covering 916 to 926 (DGPRSETKEFT) has biased composition (basic and acidic residues). N-linked (GlcNAc...) asparagine glycans are attached at residues N973 and N988. 2 disordered regions span residues 1011–1040 (TQVG…PTLP) and 1090–1111 (TTAA…TKIH). Over residues 1024-1040 (PAPPNEATPTAAPPTLP) the composition is skewed to pro residues. Residues 1090 to 1105 (TTAAATTTTESPPTTT) show a composition bias toward low complexity. Positions 1114–1206 (APDEQSIWNV…ITFMTSTAYT (93 aa)) constitute a Fibronectin type-III 5 domain. Residues 1218-1238 (FIGLMCAIALLVLILLIVCFI) traverse the membrane as a helical segment. Over 1239–1347 (KRSRGGKYPV…SPVNAIYSLA (109 aa)) the chain is Cytoplasmic. The tract at residues 1248-1347 (VREKKDVPLG…SPVNAIYSLA (100 aa)) is disordered. Over residues 1261–1272 (PKEEDGSFDYSD) the composition is skewed to acidic residues. A phosphoserine mark is found at S1267, S1281, S1294, S1297, S1333, S1334, and S1338. Positions 1278–1291 (LQGSQTSLDGTIKQ) are enriched in polar residues.

The protein belongs to the immunoglobulin superfamily. L1/neurofascin/NgCAM family. Horseshoe-shaped homodimer. Probable constituent of a NFASC/NRCAM/ankyrin-G complex. Associates with the sodium channel beta-1 (SCN1B) and beta-3 (SCN3B) subunits. Interacts with GLDN/gliomedin. Interacts with MYOC.

The protein resides in the cell membrane. Its subcellular location is the cell junction. The protein localises to the paranodal septate junction. In terms of biological role, cell adhesion, ankyrin-binding protein which may be involved in neurite extension, axonal guidance, synaptogenesis, myelination and neuron-glial cell interactions. The sequence is that of Neurofascin (NFASC) from Homo sapiens (Human).